The sequence spans 230 residues: Prepilin leader peptidase/N-methyltransferase (230 aa).

Helical transmembrane passes span 1–21 (MIYF…WFYL), 60–80 (GHIL…QIAF), 84–104 (IFTV…YLDW), 114–134 (CLWL…LLTL), 140–160 (SAAS…FYYG), 181–201 (LETL…FSLI), and 208–228 (FLPF…VKYY).

It belongs to the peptidase A24 family.

It localises to the cell inner membrane. It carries out the reaction Typically cleaves a -Gly-|-Phe- bond to release an N-terminal, basic peptide of 5-8 residues from type IV prepilin, and then N-methylates the new N-terminal amino group, the methyl donor being S-adenosyl-L-methionine.. Its function is as follows. Plays a role in type II pseudopili formation by proteolytically removing the leader sequence from substrate proteins and subsequently monomethylating the alpha-amino group of the newly exposed N-terminal phenylalanine. Substrates include proteins required for biogenesis of the type II general secretory apparatus. This chain is Prepilin leader peptidase/N-methyltransferase (hofD), found in Haemophilus influenzae (strain ATCC 51907 / DSM 11121 / KW20 / Rd).